The sequence spans 227 residues: 7-cyano-7-deazaguanine synthase (227 aa).

Leu8–Leu18 lines the ATP pocket. Positions 192, 202, 205, and 208 each coordinate Zn(2+).

The protein belongs to the QueC family. Zn(2+) serves as cofactor.

It carries out the reaction 7-carboxy-7-deazaguanine + NH4(+) + ATP = 7-cyano-7-deazaguanine + ADP + phosphate + H2O + H(+). Its pathway is purine metabolism; 7-cyano-7-deazaguanine biosynthesis. Functionally, catalyzes the ATP-dependent conversion of 7-carboxy-7-deazaguanine (CDG) to 7-cyano-7-deazaguanine (preQ(0)). This is 7-cyano-7-deazaguanine synthase from Rickettsia prowazekii (strain Madrid E).